The primary structure comprises 489 residues: Hydantoin permease (489 aa).

12 helical membrane-spanning segments follow: residues 30 to 50 (FSLA…IAAG), 58 to 78 (VWQV…LLFF), 104 to 124 (LIPI…QTWL), 144 to 164 (LWIV…ITFI), 167 to 187 (MNVF…YLML), 207 to 227 (MPFS…VVSI), 258 to 278 (LGMV…MVLV), 299 to 321 (AILF…NLLS), 339 to 359 (GVIV…AGVL), 362 to 382 (FLNL…SDYF), 405 to 424 (RGVN…VSFL), and 428 to 445 (LMFV…IPAM). Alanine 38 and isoleucine 41 together coordinate Na(+). Glutamine 121 provides a ligand contact to substrate. Residue glycine 219 participates in substrate binding. Na(+)-binding residues include alanine 309, serine 312, and threonine 313. Asparagine 318 provides a ligand contact to substrate. The interval 468-489 (PIGPVAPADESATANTKEQNQR) is disordered. Polar residues predominate over residues 479 to 489 (ATANTKEQNQR).

This sequence belongs to the purine-cytosine permease (2.A.39) family.

The protein localises to the membrane. With respect to regulation, inhibited by dinitrophenol, 5-(2-naphthylmethyl)-D-hydantoin (D-NMH), 5-(2-naphthylmethyl)-L-hydantoin (L-NMH), 5-bromovinylhydantoin (BVH) and 5-indolylmethyl-L-hydantoin (L-IMH). The affinity of benzyl-hydantoin is increased over 10-fold in the presence of 15 mM of sodium. In terms of biological role, nucleobase-proton symporter that mediates the sodium-dependent binding and uptake of 5-aryl-substituted hydantoin compounds. 5-indolyl methyl hydantoin and 5-benzyl hydantoin are the preferred substrates, with selectivity for a hydrophobic substituent in position 5 of hydantoin and for the L isomer over the D isomer. This is Hydantoin permease from Microbacterium maritypicum (Microbacterium liquefaciens).